The primary structure comprises 218 residues: MEPFIKHKGLVAPLDRANVDTDAIIPKQFLKSIRRTGFGPFLFDEWRYLDEGQPDMDCSQRPVNPDFVLNQARYQGASILLTRRNFGCGSSREHAPWALKDFGFRAIIAPSFADIFYNNCFKNGLLPLVLTEAQVDRLFKEVEAAPGYELEIDLPEQQVRTPAGEAFEFEIDGFRKHALLEGLDEIGLTLQHAEDIRAYEARRREQAPWLFTDLEEGR.

It belongs to the LeuD family. LeuD type 1 subfamily. Heterodimer of LeuC and LeuD.

The enzyme catalyses (2R,3S)-3-isopropylmalate = (2S)-2-isopropylmalate. It functions in the pathway amino-acid biosynthesis; L-leucine biosynthesis; L-leucine from 3-methyl-2-oxobutanoate: step 2/4. Its function is as follows. Catalyzes the isomerization between 2-isopropylmalate and 3-isopropylmalate, via the formation of 2-isopropylmaleate. In Alkalilimnicola ehrlichii (strain ATCC BAA-1101 / DSM 17681 / MLHE-1), this protein is 3-isopropylmalate dehydratase small subunit.